Reading from the N-terminus, the 480-residue chain is Zinc finger protein ztf-16 (480 aa).

Residues 5-27 (NACTECGFTTTVFSEFQGHIEKH) form a C2H2-type 1 zinc finger. Residues 25–75 (EKHENEHSRSSSGEMSNSQTIEWGDGIQSSTPSPRSTPPSDPTPSPDSDEH) form a disordered region. Over residues 34 to 45 (SSSGEMSNSQTI) the composition is skewed to polar residues. A compositionally biased stretch (pro residues) spans 59-69 (RSTPPSDPTPS). C2H2-type zinc fingers lie at residues 103 to 125 (HVCPHCNFTTCMSQHMKSHLEAH), 133 to 155 (YQCDICKMQFSQKANMHRHRMRH), 161 to 183 (YECRFCKKRFFRKDQMQEHSMTH), 190 to 215 (FDCPVSQCNMQFSQHNALRAHLEETH), and 223 to 246 (ASCKRCNLMFANSRRLLLHFQTRH). Disordered stretches follow at residues 243-275 (QTRHDDSESSPKKENTPKRKKLSNGNALPMDPA), 290-311 (EFSPPNTDTSDNSTSSEFDKIP), and 376-417 (TSSS…KEDE). Basic and acidic residues predominate over residues 244 to 259 (TRHDDSESSPKKENTP). 2 stretches are compositionally biased toward low complexity: residues 292-305 (SPPNTDTSDNSTSS) and 376-403 (TSSSVSVSAPSPSEQSHSPPANESSLSL). Residues 404-413 (TEKEKSPTPE) show a composition bias toward basic and acidic residues. 2 consecutive C2H2-type zinc fingers follow at residues 420–442 (VECCHCGMMFYDNTMYLLHKSLH) and 448–472 (FKCALCGTQCGEKYMFTTHVIFADH).

This sequence belongs to the Ikaros C2H2-type zinc-finger protein family. Expressed in the somatic gonad, hypodermis and cells in the head and tail. Expressed in amphid and phasmid sheath glia, amphid and phasmid socket glia, and in neurons in the head.

The protein resides in the nucleus. Its function is as follows. Positively regulates the expression of ver-1 in the amphid sheath glia of amphid sensory neurons. Together with ehn-3, plays a role in somatic gonad development and is required for proper gonadal primordium assembly and somatic gonad precursor cell morphology. The protein is Zinc finger protein ztf-16 of Caenorhabditis elegans.